Reading from the N-terminus, the 466-residue chain is MRAPGMRSRPAGPALLLLLLFLGAAESVRRAQPPRRYTPDWPSLDSRPLPAWFDEAKFGVFIHWGVFSVPAWGSEWFWWHWQGEGRPQYQRFMRDNYPPGFSYADFGPQFTARFFHPEEWADLFQAAGAKYVVLTTKHHEGFTNWPSPVSWNWNSKDVGPHRDLVGELGTALRKRNIRYGLYHSLLEWFHPLYLLDKKNGFKTQHFVSAKTMPELYDLVNSYKPDLIWSDGEWECPDTYWNSTNFLSWLYNDSPVKDEVVVNDRWGQNCSCHHGGYYNCEDKFKPQSLPDHKWEMCTSIDKFSWGYRRDMALSDVTEESEIISELVQTVSLGGNYLLNIGPTKDGLIVPIFQERLLAVGKWLSINGEAIYASKPWRVQWEKNTTSVWYTSKGSAVYAIFLHWPENGVLNLESPITTSTTKITMLGIQGDLKWSTDPDKGLFISLPQLPPSAVPAEFAWTIKLTGVK.

Residues 1-31 (MRAPGMRSRPAGPALLLLLLFLGAAESVRRA) form the signal peptide. T170 carries the phosphothreonine modification. N241, N268, and N382 each carry an N-linked (GlcNAc...) asparagine glycan.

The protein belongs to the glycosyl hydrolase 29 family. As to quaternary structure, homotetramer.

It localises to the lysosome. It carries out the reaction an alpha-L-fucoside + H2O = L-fucose + an alcohol. It catalyses the reaction a neolactoside IV(2)-alpha-Fuc-nLc4Cer(d18:1(4E)) + H2O = a neolactoside nLc4Cer(d18:1(4E)) + L-fucose. The enzyme catalyses a neolactoside IV(2)-alpha-Fuc-nLc4Cer(d18:0) + H2O = a neolactoside nLc4Cer(d18:0) + L-fucose. Its function is as follows. Alpha-L-fucosidase is responsible for hydrolyzing the alpha-1,6-linked fucose joined to the reducing-end N-acetylglucosamine of the carbohydrate moieties of glycoproteins. This Homo sapiens (Human) protein is Tissue alpha-L-fucosidase.